A 247-amino-acid polypeptide reads, in one-letter code: NAD-dependent protein deacetylase (247 aa).

A Deacetylase sirtuin-type domain is found at 1 to 244 (MIYEKVAEEL…PKILENVRQK (244 aa)). The NAD(+) site is built by Ala-22, Thr-26, Phe-33, Arg-34, Gln-98, Ile-100, Asp-101, and His-116. Phe-33 is a binding site for nicotinamide. 2 residues coordinate nicotinamide: Ile-100 and Asp-101. His-116 (proton acceptor) is an active-site residue. Zn(2+)-binding residues include Cys-124, Cys-127, Cys-149, and Cys-151. Ser-187, Ser-188, Asn-212, and Val-230 together coordinate NAD(+).

It belongs to the sirtuin family. Class U subfamily. In terms of assembly, monomer. Zn(2+) serves as cofactor.

It is found in the cytoplasm. It carries out the reaction N(6)-acetyl-L-lysyl-[protein] + NAD(+) + H2O = 2''-O-acetyl-ADP-D-ribose + nicotinamide + L-lysyl-[protein]. Functionally, NAD-dependent protein deacetylase which modulates the activities of several enzymes which are inactive in their acetylated form. Deacetylates the N-terminal lysine residue of albA1, the major archaeal DNA compaction protein and that, in turn, increases albA1's DNA binding affinity, thereby repressing transcription. The sequence is that of NAD-dependent protein deacetylase from Saccharolobus solfataricus (strain ATCC 35092 / DSM 1617 / JCM 11322 / P2) (Sulfolobus solfataricus).